Consider the following 844-residue polypeptide: DNA mismatch repair protein MutS (844 aa).

Residue 602-609 (GPNMSGKS) participates in ATP binding.

This sequence belongs to the DNA mismatch repair MutS family.

This protein is involved in the repair of mismatches in DNA. It is possible that it carries out the mismatch recognition step. This protein has a weak ATPase activity. This chain is DNA mismatch repair protein MutS, found in Streptococcus pneumoniae (strain Hungary19A-6).